A 280-amino-acid chain; its full sequence is Serine protease 33 (280 aa).

The N-terminal stretch at 1 to 22 (MRGVSCLQVLLLLVLGAAGTQG) is a signal peptide. The Peptidase S1 domain maps to 37 to 279 (IVGGRDGRDG…YSPWIQARVS (243 aa)). A disulfide bridge links Cys-62 with Cys-78. Catalysis depends on charge relay system residues His-77 and Asp-126. 3 cysteine pairs are disulfide-bonded: Cys-160–Cys-237, Cys-193–Cys-216, and Cys-227–Cys-255. The active-site Charge relay system is Ser-231.

It belongs to the peptidase S1 family. Predominantly expressed in macrophages. Present in the spleen, small and large intestine, lung and brain (at protein level). Highly expressed in peripheral leukocytes, ovary, retina, spleen and stomach. Moderately expressed in thymus, uterus and platelets, as well as some brain tissues, such as thalamus and fetal brain.

It is found in the secreted. Serine protease that has amidolytic activity, cleaving its substrates before Arg residues. The polypeptide is Serine protease 33 (PRSS33) (Homo sapiens (Human)).